The chain runs to 103 residues: Large ribosomal subunit protein bL21 (103 aa).

The protein belongs to the bacterial ribosomal protein bL21 family. In terms of assembly, part of the 50S ribosomal subunit. Contacts protein L20.

In terms of biological role, this protein binds to 23S rRNA in the presence of protein L20. The sequence is that of Large ribosomal subunit protein bL21 from Marinobacter nauticus (strain ATCC 700491 / DSM 11845 / VT8) (Marinobacter aquaeolei).